A 150-amino-acid polypeptide reads, in one-letter code: Photosystem I reaction center subunit XI (150 aa).

The Stromal segment spans residues Met-1–Asp-72. The helical transmembrane segment at Val-73–Leu-93 threads the bilayer. Topologically, residues Ser-94 to Gln-118 are lumenal. Residues Phe-119 to Ala-139 form a helical membrane-spanning segment. Topologically, residues Asn-140 to Ser-150 are stromal.

This sequence belongs to the PsaL family.

The protein localises to the plastid. It localises to the chloroplast thylakoid membrane. This chain is Photosystem I reaction center subunit XI, found in Gracilaria tenuistipitata var. liui (Red alga).